The chain runs to 441 residues: GVGFKAGVKDYRLTYYTPEYKTKDTDILAAFRMTPQPGVPAEEAGAAVAAESSTGTWTTVWTDGLTSLDRYKGRCYDIEPVAGEENQYIAYVAYPLDLFEEGSVTNMFTSIVGNVFGFKALRALXXEDLRIPPAYSKTFMGPPHGIQVERDKLNKYGRPLLGCTIKPKLGLSAKNYGRAVYECLRGGLDFTKDDENVNSQPFMRWRDRFLFVAEALFKSQAETGEVKGHYLNATAGTCEEMMKRAIFARELGAPIVMHDYLTGGFTANTSLAFYCRDNGLLLHIHRAMHAVIDRQKDHGMHFRVLAKGLRMSGGDHIHAGTVVGKLEGEREVTLGFVDLLRDDFIQKDRSRGIYFTQDWVSMPGVFPVASGGIHVWHMPALTEIFGDDSVLQFGGGTLGHPWGNAPGAVANRVALEACVQARNEGRDLAREGNEIIREASK.

Residue lysine 5 is modified to N6,N6,N6-trimethyllysine. Asparagine 114 and threonine 164 together coordinate substrate. Lysine 166 functions as the Proton acceptor in the catalytic mechanism. Lysine 168 is a substrate binding site. Mg(2+) is bound by residues lysine 192, aspartate 194, and glutamate 195. Lysine 192 bears the N6-carboxylysine mark. Histidine 285 serves as the catalytic Proton acceptor. Substrate is bound by residues arginine 286, histidine 318, and serine 370.

Belongs to the RuBisCO large chain family. Type I subfamily. As to quaternary structure, heterohexadecamer of 8 large chains and 8 small chains; disulfide-linked. The disulfide link is formed within the large subunit homodimers. The cofactor is Mg(2+). Post-translationally, the disulfide bond which can form in the large chain dimeric partners within the hexadecamer appears to be associated with oxidative stress and protein turnover.

The protein localises to the plastid. It localises to the chloroplast. The catalysed reaction is 2 (2R)-3-phosphoglycerate + 2 H(+) = D-ribulose 1,5-bisphosphate + CO2 + H2O. It carries out the reaction D-ribulose 1,5-bisphosphate + O2 = 2-phosphoglycolate + (2R)-3-phosphoglycerate + 2 H(+). In terms of biological role, ruBisCO catalyzes two reactions: the carboxylation of D-ribulose 1,5-bisphosphate, the primary event in carbon dioxide fixation, as well as the oxidative fragmentation of the pentose substrate in the photorespiration process. Both reactions occur simultaneously and in competition at the same active site. The protein is Ribulose bisphosphate carboxylase large chain of Pellaea rotundifolia (Button fern).